Reading from the N-terminus, the 200-residue chain is Imidazoleglycerol-phosphate dehydratase (200 aa).

The protein belongs to the imidazoleglycerol-phosphate dehydratase family.

The protein resides in the cytoplasm. It catalyses the reaction D-erythro-1-(imidazol-4-yl)glycerol 3-phosphate = 3-(imidazol-4-yl)-2-oxopropyl phosphate + H2O. It functions in the pathway amino-acid biosynthesis; L-histidine biosynthesis; L-histidine from 5-phospho-alpha-D-ribose 1-diphosphate: step 6/9. The polypeptide is Imidazoleglycerol-phosphate dehydratase (Chlorobium phaeovibrioides (strain DSM 265 / 1930) (Prosthecochloris vibrioformis (strain DSM 265))).